We begin with the raw amino-acid sequence, 529 residues long: Delayed-rectifier potassium channel regulatory subunit KCNS1 (529 aa).

Residues 1–217 (MLMLLVRGTR…LTMENPGYSL (217 aa)) lie on the Cytoplasmic side of the membrane. The chain crosses the membrane as a helical span at residues 218-239 (PSKLFSCVSISVVLASIAAMCI). The Extracellular segment spans residues 240-270 (HSLPEYQAREAAAAVAAVAAGRSPEGVRDDP). Residues 271–293 (VLRRLEYFCIAWFSFEVSSRLLL) traverse the membrane as a helical segment. Residues 294–304 (APSTRNFFCHP) lie on the Cytoplasmic side of the membrane. The chain crosses the membrane as a helical span at residues 305 to 322 (LNLIDIVSVLPFYLTLLA). The Extracellular segment spans residues 323–340 (GVALGDQGGTGGKELGHL). A helical; Voltage-sensor membrane pass occupies residues 341-361 (GKVVQVFRLMRIFRVLKLARH). The Cytoplasmic portion of the chain corresponds to 362–376 (STGLRSLGATLKHSY). Residues 377 to 398 (REVGILLLYLAVGVSVFSGVAY) form a helical membrane-spanning segment. Topologically, residues 399–411 (TAEKEEDVGFNTI) are extracellular. An intramembrane region (helical) is located at residues 412 to 423 (PACWWWGTVSMT). The short motif at 424 to 429 (TVGYGD) is the Selectivity filter element. An intramembrane segment occupies 424–431 (TVGYGDVV). The Extracellular portion of the chain corresponds to 432–438 (PVTVAGK). A helical membrane pass occupies residues 439-467 (LAASGCILGGILVVALPITIIFNKFSHFY). Topologically, residues 468-529 (RRQKALEAAV…PSEPPHPQMY (62 aa)) are cytoplasmic. The segment at 500–529 (LETSREISQEGRSADLETQAPSEPPHPQMY) is disordered. The segment covering 502–514 (TSREISQEGRSAD) has biased composition (basic and acidic residues).

The protein belongs to the potassium channel family. S (TC 1.A.1.2) subfamily. Kv9.1/KCNS1 sub-subfamily. Heterotetramer with KCNB1. Heterotetramer with KCNB2. Does not form homomultimers.

It is found in the cell membrane. Functionally, potassium channel regulatory subunit that modulate the delayed rectifier voltage-gated potassium channel activity of KCNB1 and KCNB2 by altering their kinetics, expression levels, and shifting the half-inactivation potential to more polarized values. While it does not form functional channels on its own, it can form functional heterotetrameric channels with KCNB1 and KCNB2. Each regulatory subunit has unique regulatory properties that can lead to extensive inhibition, significant changes in kinetics, and/or substantial shifts in the voltage dependencies of the inactivation process. The chain is Delayed-rectifier potassium channel regulatory subunit KCNS1 from Colobus guereza (Mantled guereza).